Here is a 126-residue protein sequence, read N- to C-terminus: uncharacterized protein (126 aa).

Residues 1 to 27 (MSKSKTPNFDDMEVLDDTNDEYDDSES) are disordered. The span at 10 to 27 (DDMEVLDDTNDEYDDSES) shows a compositional bias: acidic residues.

This is an uncharacterized protein from Halorubrum sp. PV6 (HRPV-1).